A 245-amino-acid chain; its full sequence is DNA repair protein RecO (245 aa).

This sequence belongs to the RecO family.

In terms of biological role, involved in DNA repair and RecF pathway recombination. The sequence is that of DNA repair protein RecO from Klebsiella pneumoniae (strain 342).